The sequence spans 358 residues: Snurportin-1 (358 aa).

Residue Met1 is modified to N-acetylmethionine. 2 disordered regions span residues 1 to 26 (MEEL…APHP) and 69 to 90 (DWTG…MDID). Positions 1-65 (MEELSQALAS…LDYVNHARRL (65 aa)) are necessary for interaction with KPNB1 and m3G-cap U1 and U5 snRNP import receptor activity. Positions 1-160 (MEELSQALAS…NRFSSLLPGG (160 aa)) are necessary for interaction with XPO1. Over residues 7 to 22 (ALASSFSVSQELNSTA) the composition is skewed to polar residues. The IBB domain occupies 11 to 73 (SFSVSQELNS…RLAEDDWTGM (63 aa)). Ser75 is subject to Phosphoserine. An interaction with m3G-cap structure region spans residues 128–130 (GKR). The necessary for binding to the m3G-cap structure stretch occupies residues 210–329 (MHSKLPEEEG…DTKEKLTHKA (120 aa)). Residues 315 to 341 (KRSQEDTKEKLTHKASENGHYELEHLS) are compositionally biased toward basic and acidic residues. The segment at 315–358 (KRSQEDTKEKLTHKASENGHYELEHLSTPKLRNPPHSSESLMDN) is disordered. Over residues 349 to 358 (PHSSESLMDN) the composition is skewed to polar residues. Ser351 is modified (phosphoserine).

Belongs to the snurportin family. Component of an import snRNP complex composed of KPNB1, SNUPN, SMN1 and ZNF259. Component of a nuclear export receptor complex composed of KPNB1, Ran, SNUPN and XPO1. Found in a trimeric export complex with SNUPN, Ran and XPO1. Interacts (via IBB domain) with KPNB1; the interaction is direct. Interacts with DDX20, IPO7, SMN1, SNRPB and XPO1. Interacts directly with XPO1. Its interaction with XPO1 and binding to m3G-cap U snRNPs appears to be mutually exclusive. Can form homomers.

Its subcellular location is the nucleus. It localises to the cytoplasm. Its function is as follows. Functions as an U snRNP-specific nuclear import adapter. Involved in the trimethylguanosine (m3G)-cap-dependent nuclear import of U snRNPs. Binds specifically to the terminal m3G-cap U snRNAs. This chain is Snurportin-1 (Snupn), found in Mus musculus (Mouse).